Reading from the N-terminus, the 213-residue chain is MESTDKLTDTNAILAYLYETFPLCFIAEGETKPLKIGLFQDLAERLADDSKVSKTQLRVALRRYTSSWRYLKSVKAGAQRVDLDGQPCGELEQEHIDHAQAMLKESQEKAKAKRAAQTPKAAPAGKAPAKKAPKKVAVPARKTERPAKAAPKVEPVVNLVQAQLTDLAKKQRVNVKLGMTPVAGVITDINKEDIHVQLDSGLTIKVKAEHILL.

The tract at residues 105 to 150 is disordered; the sequence is ESQEKAKAKRAAQTPKAAPAGKAPAKKAPKKVAVPARKTERPAKAA. Residues 115 to 127 show a composition bias toward low complexity; sequence AAQTPKAAPAGKA.

Belongs to the ProQ family.

It localises to the cytoplasm. Functionally, RNA chaperone with significant RNA binding, RNA strand exchange and RNA duplexing activities. The polypeptide is RNA chaperone ProQ (Shewanella oneidensis (strain ATCC 700550 / JCM 31522 / CIP 106686 / LMG 19005 / NCIMB 14063 / MR-1)).